The primary structure comprises 143 residues: Nucleoside diphosphate kinase (143 aa).

ATP is bound by residues lysine 11, phenylalanine 59, arginine 87, threonine 93, arginine 104, and asparagine 114. Catalysis depends on histidine 117, which acts as the Pros-phosphohistidine intermediate.

Belongs to the NDK family. Homotetramer. The cofactor is Mg(2+).

The protein resides in the cytoplasm. It carries out the reaction a 2'-deoxyribonucleoside 5'-diphosphate + ATP = a 2'-deoxyribonucleoside 5'-triphosphate + ADP. It catalyses the reaction a ribonucleoside 5'-diphosphate + ATP = a ribonucleoside 5'-triphosphate + ADP. Its function is as follows. Major role in the synthesis of nucleoside triphosphates other than ATP. The ATP gamma phosphate is transferred to the NDP beta phosphate via a ping-pong mechanism, using a phosphorylated active-site intermediate. The protein is Nucleoside diphosphate kinase of Nitrosococcus oceani (strain ATCC 19707 / BCRC 17464 / JCM 30415 / NCIMB 11848 / C-107).